Consider the following 42-residue polypeptide: GHVPCGKDGRKCGYHTHCCNCCLSGICKPSTSLIGCSTSSFT.

4 cysteine pairs are disulfide-bonded: Cys5-Cys19, Cys12-Cys22, Cys18-Cys27, and Cys21-Cys36.

Belongs to the conotoxin I1 superfamily. As to expression, expressed by the venom duct.

Its subcellular location is the secreted. Functionally, iota-conotoxins bind to voltage-gated sodium channels (Nav) and act as agonists by shifting the voltage-dependence of activation to more hyperpolarized levels. Produces general excitatory symptoms. The chain is Iota-conotoxin-like R11.16 from Conus radiatus (Rayed cone).